A 446-amino-acid chain; its full sequence is Regulator of drug sensitivity 2 (446 aa).

Residues 15 to 45 constitute a DNA-binding region (zn(2)-C6 fungal-type); it reads KTCLFCKRSHVVCDKQRPCSRCVKRDIAHLC. 2 disordered regions span residues 52–106 and 158–218; these read VPNE…PKLD and ASNV…KEES. 2 stretches are compositionally biased toward polar residues: residues 56–70 and 84–96; these read MPSQHESSPNDNNIQ and DYQNEPVNKSGST. Ser102 is modified (phosphoserine). Over residues 160-177 the composition is skewed to polar residues; sequence NVHLENGSQTTQSPLEYQ. Residues 178–192 are compositionally biased toward basic and acidic residues; sequence NDNRRDEIGVARQEN. Residues 193-206 show a composition bias toward polar residues; the sequence is RSPTIMSGSSNSIS. Over residues 207–218 the composition is skewed to basic and acidic residues; that stretch reads KGDKQDQEKEES. The residue at position 231 (Thr231) is a Phosphothreonine.

Post-translationally, phosphorylated by SNF1 in absence of glucose. The phosphorylation is required for induction of transcription of gluconeogenic genes.

It is found in the cytoplasm. It localises to the nucleus. Its function is as follows. Transcription factor which regulates the expression of genes for gluconeogenesis, the TCA cycle, and glucose metabolism. Involved in the cell wall remodeling process and drug resistance. This Saccharomyces cerevisiae (strain ATCC 204508 / S288c) (Baker's yeast) protein is Regulator of drug sensitivity 2 (RDS2).